Reading from the N-terminus, the 724-residue chain is MSKMLYTLGGWVARNRIKAICAWIVVLVAAIGLAVTLKPSFSEDMSIPDTPSEKAMDVIQKEFPHGPDKGSIRVIFGAGDGEKLTGKPAKKAIEDTFKEISKDDSVDSIASPFVTGTIAKDGTVAYADIQYKSSADDIKDYSIKHLKDSLKMADDEGLQTELSGDVPGAEMEIGGVSEIVGIILAFVVLAITFGSLLIAGLPILTALIGLGVSIGLVLIGTQVFDIASVSLSLAGMIGLAVGIDYALFIFTKHRQFLGEGIQKNESIARAVGTAGSAVVFAGLTVIVALCGLTVVNIPFMSAMGLTAGLSVLMAVLASITLVPAVLSIAGKRMIPKSNKKIEKQSTETNVWGRFVTKNPIMLSVCSILILIVISIPSMHLELGLPDAGMKAKDNPDRRAYDLLAEGFGEGFNGQLTIVADATNATENKAEAFADAVKEIKGLDHVASVTPAMPNKEGNFAIITVVPETGPNDVTTKDLVHDVRSLSDKNGVDLLVTGSTAVNIDISDRLNDAIPVFAVLIVGFAFVLLTIVFRSLLVPLVAVAGFMLTMTATLGICVFVLQDGNLIDFFKIPEKGPILAFLPILSIGILFGLAMDYQVFLVSRMREEYVKTNNPVQAIQAGLKHSGPVVTAAGLIMIFVFAGFIFAGEASIKANGLALSFGVLFDAFIVRMTLIPSVMKLMGNAAWYLPKWLDKIIPNVDIEGHQLTKEIQPEIDHEQKKQISV.

The next 12 membrane-spanning stretches (helical) occupy residues 17–37 (IKAI…AVTL), 179–199 (IVGI…LLIA), 200–220 (GLPI…VLIG), 231–251 (LSLA…FIFT), 277–297 (AVVF…VVNI), 309–329 (LSVL…LSIA), 360–380 (IMLS…SMHL), 512–532 (AIPV…TIVF), 539–559 (LVAV…CVFV), 575–595 (GPIL…LAMD), 627–647 (PVVT…IFAG), and 655–675 (GLAL…TLIP).

This sequence belongs to the resistance-nodulation-cell division (RND) (TC 2.A.6) family. MmpL subfamily.

Its subcellular location is the cell membrane. The polypeptide is Membrane protein YdfJ (ydfJ) (Bacillus subtilis (strain 168)).